The primary structure comprises 289 residues: tRNA pseudouridine synthase B (289 aa).

The active-site Nucleophile is the Asp38.

It belongs to the pseudouridine synthase TruB family. Type 1 subfamily.

It catalyses the reaction uridine(55) in tRNA = pseudouridine(55) in tRNA. Functionally, responsible for synthesis of pseudouridine from uracil-55 in the psi GC loop of transfer RNAs. The sequence is that of tRNA pseudouridine synthase B from Clostridium kluyveri (strain ATCC 8527 / DSM 555 / NBRC 12016 / NCIMB 10680 / K1).